The primary structure comprises 286 residues: Phosphatidylserine decarboxylase proenzyme (286 aa).

Catalysis depends on charge relay system; for autoendoproteolytic cleavage activity residues D91, H148, and S251. S251 serves as the catalytic Schiff-base intermediate with substrate; via pyruvic acid; for decarboxylase activity. Position 251 is a pyruvic acid (Ser); by autocatalysis (S251).

Belongs to the phosphatidylserine decarboxylase family. PSD-B subfamily. Prokaryotic type I sub-subfamily. As to quaternary structure, heterodimer of a large membrane-associated beta subunit and a small pyruvoyl-containing alpha subunit. Pyruvate is required as a cofactor. Post-translationally, is synthesized initially as an inactive proenzyme. Formation of the active enzyme involves a self-maturation process in which the active site pyruvoyl group is generated from an internal serine residue via an autocatalytic post-translational modification. Two non-identical subunits are generated from the proenzyme in this reaction, and the pyruvate is formed at the N-terminus of the alpha chain, which is derived from the carboxyl end of the proenzyme. The autoendoproteolytic cleavage occurs by a canonical serine protease mechanism, in which the side chain hydroxyl group of the serine supplies its oxygen atom to form the C-terminus of the beta chain, while the remainder of the serine residue undergoes an oxidative deamination to produce ammonia and the pyruvoyl prosthetic group on the alpha chain. During this reaction, the Ser that is part of the protease active site of the proenzyme becomes the pyruvoyl prosthetic group, which constitutes an essential element of the active site of the mature decarboxylase.

The protein localises to the cell membrane. It catalyses the reaction a 1,2-diacyl-sn-glycero-3-phospho-L-serine + H(+) = a 1,2-diacyl-sn-glycero-3-phosphoethanolamine + CO2. It participates in phospholipid metabolism; phosphatidylethanolamine biosynthesis; phosphatidylethanolamine from CDP-diacylglycerol: step 2/2. Its function is as follows. Catalyzes the formation of phosphatidylethanolamine (PtdEtn) from phosphatidylserine (PtdSer). In Marinobacter nauticus (strain ATCC 700491 / DSM 11845 / VT8) (Marinobacter aquaeolei), this protein is Phosphatidylserine decarboxylase proenzyme.